The sequence spans 692 residues: E3 ubiquitin-protein ligase brl1 (692 aa).

The stretch at 302 to 370 forms a coiled coil; the sequence is SNEEKIESIN…RNERDSLVAK (69 aa). The RING-type zinc-finger motif lies at 639–679; the sequence is CSVCNFSNWKSKLIPNCGHAFCSNCMEPFYEHKTSTCPQCE.

Belongs to the BRE1 family. As to quaternary structure, component of the histone H2B ubiquitin ligase complex (HULC) composed of at least brl1, brl2, rhp6 and shf1.

It localises to the nucleus. The enzyme catalyses S-ubiquitinyl-[E2 ubiquitin-conjugating enzyme]-L-cysteine + [acceptor protein]-L-lysine = [E2 ubiquitin-conjugating enzyme]-L-cysteine + N(6)-ubiquitinyl-[acceptor protein]-L-lysine.. It functions in the pathway protein modification; protein ubiquitination. In terms of biological role, E3 ubiquitin-protein ligase which belongs to the histone H2B ubiquitin ligase complex (HULC) which mediates monoubiquitination of histone H2B to form H2BK123ub1. H2BK123ub1 gives a specific tag for epigenetic transcriptional activation and is also a prerequisite for H3K4me and H3K79me formation. In Schizosaccharomyces pombe (strain 972 / ATCC 24843) (Fission yeast), this protein is E3 ubiquitin-protein ligase brl1 (brl1).